The primary structure comprises 242 residues: Biosynthetic peptidoglycan transglycosylase (242 aa).

A helical transmembrane segment spans residues 19-39; the sequence is ILAALAVFWGGGIALFSVVPV.

The protein belongs to the glycosyltransferase 51 family.

It localises to the cell inner membrane. It carries out the reaction [GlcNAc-(1-&gt;4)-Mur2Ac(oyl-L-Ala-gamma-D-Glu-L-Lys-D-Ala-D-Ala)](n)-di-trans,octa-cis-undecaprenyl diphosphate + beta-D-GlcNAc-(1-&gt;4)-Mur2Ac(oyl-L-Ala-gamma-D-Glu-L-Lys-D-Ala-D-Ala)-di-trans,octa-cis-undecaprenyl diphosphate = [GlcNAc-(1-&gt;4)-Mur2Ac(oyl-L-Ala-gamma-D-Glu-L-Lys-D-Ala-D-Ala)](n+1)-di-trans,octa-cis-undecaprenyl diphosphate + di-trans,octa-cis-undecaprenyl diphosphate + H(+). It functions in the pathway cell wall biogenesis; peptidoglycan biosynthesis. Functionally, peptidoglycan polymerase that catalyzes glycan chain elongation from lipid-linked precursors. The polypeptide is Biosynthetic peptidoglycan transglycosylase (Salmonella paratyphi B (strain ATCC BAA-1250 / SPB7)).